The primary structure comprises 109 residues: Large ribosomal subunit protein P1C (109 aa).

The segment covering Ala-68–Glu-83 has biased composition (low complexity). The segment at Ala-68–Asp-109 is disordered. Residues Lys-94–Met-103 show a composition bias toward acidic residues. The residue at position 99 (Ser-99) is a Phosphoserine.

The protein belongs to the eukaryotic ribosomal protein P1/P2 family. Component of the large ribosomal subunit (LSU). Mature yeast ribosomes consist of a small (40S) and a large (60S) subunit. The 40S small subunit contains 1 molecule of ribosomal RNA (18S rRNA) and at least 33 different proteins. The large 60S subunit contains 3 rRNA molecules (25S, 5.8S and 5S rRNA) and at least 46 different proteins. The acidic ribosomal P-proteins form the stalk structure of the 60S subunit. They are organized as a pentameric complex in which uL10/P0 interacts with 2 heterodimers of P1 and P2 proteins.

The protein resides in the cytoplasm. Functionally, component of the ribosome, a large ribonucleoprotein complex responsible for the synthesis of proteins in the cell. The small ribosomal subunit (SSU) binds messenger RNAs (mRNAs) and translates the encoded message by selecting cognate aminoacyl-transfer RNA (tRNA) molecules. The large subunit (LSU) contains the ribosomal catalytic site termed the peptidyl transferase center (PTC), which catalyzes the formation of peptide bonds, thereby polymerizing the amino acids delivered by tRNAs into a polypeptide chain. The nascent polypeptides leave the ribosome through a tunnel in the LSU and interact with protein factors that function in enzymatic processing, targeting, and the membrane insertion of nascent chains at the exit of the ribosomal tunnel. This is Large ribosomal subunit protein P1C (rpp103) from Schizosaccharomyces pombe (strain 972 / ATCC 24843) (Fission yeast).